The following is a 425-amino-acid chain: Tyrosine--tRNA ligase (425 aa).

Tyr-33 is an L-tyrosine binding site. The 'HIGH' region motif lies at 38 to 47; sequence PTADSLHLGN. Residues Tyr-170 and Gln-174 each coordinate L-tyrosine. Positions 230–234 match the 'KMSKS' region motif; it reads KFGKS. Residue Lys-233 coordinates ATP. Residues 356 to 422 form the S4 RNA-binding domain; the sequence is KKLIDLLVET…GKKNKMIIRL (67 aa).

Belongs to the class-I aminoacyl-tRNA synthetase family. TyrS type 1 subfamily. Homodimer.

It localises to the cytoplasm. The catalysed reaction is tRNA(Tyr) + L-tyrosine + ATP = L-tyrosyl-tRNA(Tyr) + AMP + diphosphate + H(+). Catalyzes the attachment of tyrosine to tRNA(Tyr) in a two-step reaction: tyrosine is first activated by ATP to form Tyr-AMP and then transferred to the acceptor end of tRNA(Tyr). In Protochlamydia amoebophila (strain UWE25), this protein is Tyrosine--tRNA ligase.